We begin with the raw amino-acid sequence, 56 residues long: Sec-independent protein translocase protein TatA (56 aa).

The helical transmembrane segment at 1-21 (MALGPWQIFLILVIILVLFGA) threads the bilayer.

It belongs to the TatA/E family. The Tat system comprises two distinct complexes: a TatABC complex, containing multiple copies of TatA, TatB and TatC subunits, and a separate TatA complex, containing only TatA subunits. Substrates initially bind to the TatABC complex, which probably triggers association of the separate TatA complex to form the active translocon.

It is found in the cell inner membrane. Functionally, part of the twin-arginine translocation (Tat) system that transports large folded proteins containing a characteristic twin-arginine motif in their signal peptide across membranes. TatA could form the protein-conducting channel of the Tat system. The sequence is that of Sec-independent protein translocase protein TatA from Ehrlichia ruminantium (strain Welgevonden).